Consider the following 271-residue polypeptide: Ribosome-recycling factor, chloroplastic (271 aa).

The N-terminal 78 residues, 1–78 (MAASSLSSAT…LQNRAGTFRC (78 aa)), are a transit peptide targeting the chloroplast. Residues 213 to 260 (AVRNIRRDALKSYEKLEKEKKLSEDNVKDLSADLQKLTDEYMKKVESI) are a coiled coil.

This sequence belongs to the RRF family. In terms of assembly, modeling onto the 70S ribosome suggests it binds to PSRP1. Restricted to photosynthetic tissues.

It is found in the plastid. It localises to the chloroplast stroma. In terms of biological role, responsible for the release of ribosomes from messenger RNA at the termination of chloroplastic protein biosynthesis. The sequence is that of Ribosome-recycling factor, chloroplastic (RRF) from Spinacia oleracea (Spinach).